We begin with the raw amino-acid sequence, 203 residues long: ATP-dependent Clp protease proteolytic subunit (203 aa).

Catalysis depends on S107, which acts as the Nucleophile. The active site involves H132.

It belongs to the peptidase S14 family. As to quaternary structure, fourteen ClpP subunits assemble into 2 heptameric rings which stack back to back to give a disk-like structure with a central cavity, resembling the structure of eukaryotic proteasomes.

The protein resides in the cytoplasm. It catalyses the reaction Hydrolysis of proteins to small peptides in the presence of ATP and magnesium. alpha-casein is the usual test substrate. In the absence of ATP, only oligopeptides shorter than five residues are hydrolyzed (such as succinyl-Leu-Tyr-|-NHMec, and Leu-Tyr-Leu-|-Tyr-Trp, in which cleavage of the -Tyr-|-Leu- and -Tyr-|-Trp bonds also occurs).. Its function is as follows. Cleaves peptides in various proteins in a process that requires ATP hydrolysis. Has a chymotrypsin-like activity. Plays a major role in the degradation of misfolded proteins. In Shewanella halifaxensis (strain HAW-EB4), this protein is ATP-dependent Clp protease proteolytic subunit.